Here is a 248-residue protein sequence, read N- to C-terminus: ATP synthase subunit a, chloroplastic (248 aa).

The next 5 membrane-spanning stretches (helical) occupy residues 37–57, 96–116, 134–154, 200–220, and 221–241; these read AQVLITSWIVIAILLGLAILA, VPFIGTMFLFIFVSNWSGALL, DINTTVALALPTSVAYFYAGL, LVVAVPISLVPLVVPIPMMFL, and GLFTSAIQALIFATLAAAYIG.

The protein belongs to the ATPase A chain family. As to quaternary structure, F-type ATPases have 2 components, CF(1) - the catalytic core - and CF(0) - the membrane proton channel. CF(1) has five subunits: alpha(3), beta(3), gamma(1), delta(1), epsilon(1). CF(0) has four main subunits: a, b, b' and c.

The protein resides in the plastid. The protein localises to the chloroplast thylakoid membrane. In terms of biological role, key component of the proton channel; it plays a direct role in the translocation of protons across the membrane. In Anthoceros angustus (Hornwort), this protein is ATP synthase subunit a, chloroplastic.